The chain runs to 153 residues: ATP synthase subunit b' (153 aa).

The helical transmembrane segment at 20–40 (TLPLMAVQVVLLTFILNALFF) threads the bilayer.

This sequence belongs to the ATPase B chain family. As to quaternary structure, F-type ATPases have 2 components, F(1) - the catalytic core - and F(0) - the membrane proton channel. F(1) has five subunits: alpha(3), beta(3), gamma(1), delta(1), epsilon(1). F(0) has four main subunits: a(1), b(1), b'(1) and c(10-14). The alpha and beta chains form an alternating ring which encloses part of the gamma chain. F(1) is attached to F(0) by a central stalk formed by the gamma and epsilon chains, while a peripheral stalk is formed by the delta, b and b' chains.

It localises to the cellular thylakoid membrane. Functionally, f(1)F(0) ATP synthase produces ATP from ADP in the presence of a proton or sodium gradient. F-type ATPases consist of two structural domains, F(1) containing the extramembraneous catalytic core and F(0) containing the membrane proton channel, linked together by a central stalk and a peripheral stalk. During catalysis, ATP synthesis in the catalytic domain of F(1) is coupled via a rotary mechanism of the central stalk subunits to proton translocation. Component of the F(0) channel, it forms part of the peripheral stalk, linking F(1) to F(0). The b'-subunit is a diverged and duplicated form of b found in plants and photosynthetic bacteria. This Prochlorococcus marinus (strain NATL2A) protein is ATP synthase subunit b'.